A 754-amino-acid chain; its full sequence is Ribosomal RNA large subunit methyltransferase K/L (754 aa).

Residues 46-157 (TAYRLCLWSR…RGEAILSLDL (112 aa)) form the THUMP domain.

The protein belongs to the methyltransferase superfamily. RlmKL family.

It localises to the cytoplasm. The catalysed reaction is guanosine(2445) in 23S rRNA + S-adenosyl-L-methionine = N(2)-methylguanosine(2445) in 23S rRNA + S-adenosyl-L-homocysteine + H(+). It carries out the reaction guanosine(2069) in 23S rRNA + S-adenosyl-L-methionine = N(2)-methylguanosine(2069) in 23S rRNA + S-adenosyl-L-homocysteine + H(+). Functionally, specifically methylates the guanine in position 2445 (m2G2445) and the guanine in position 2069 (m7G2069) of 23S rRNA. The polypeptide is Ribosomal RNA large subunit methyltransferase K/L (Pseudomonas fluorescens (strain ATCC BAA-477 / NRRL B-23932 / Pf-5)).